We begin with the raw amino-acid sequence, 325 residues long: Pyruvate dehydrogenase E1 component subunit beta (325 aa).

E60 lines the thiamine diphosphate pocket.

As to quaternary structure, heterodimer of an alpha and a beta chain. The cofactor is thiamine diphosphate.

The protein resides in the cytoplasm. It is found in the secreted. The enzyme catalyses N(6)-[(R)-lipoyl]-L-lysyl-[protein] + pyruvate + H(+) = N(6)-[(R)-S(8)-acetyldihydrolipoyl]-L-lysyl-[protein] + CO2. Its activity is regulated as follows. Activity of the E1 module is inhibited by the pyruvate dehydrogenase inhibitor PdhI. Its function is as follows. The pyruvate dehydrogenase complex catalyzes the overall conversion of pyruvate to acetyl-CoA and CO(2). It contains multiple copies of three enzymatic components: pyruvate dehydrogenase (E1), dihydrolipoamide acetyltransferase (E2) and lipoamide dehydrogenase (E3). In terms of biological role, the B.subtilis PDH complex also possesses branched-chain 2-oxoacid dehydrogenase (BCDH) activity. This is Pyruvate dehydrogenase E1 component subunit beta from Bacillus subtilis (strain 168).